Consider the following 369-residue polypeptide: Cyclin-dependent kinase 5 activator 2 (369 aa).

Residues Met1 to Ser11 are compositionally biased toward polar residues. Disordered regions lie at residues Met1 to Lys55, Ala72 to Arg176, and Glu330 to Arg369. Gly2 carries the N-myristoyl glycine lipid modification. Positions Ala74–Thr84 are enriched in basic residues. Thr84 bears the Phosphothreonine mark. The segment covering Arg99 to Pro112 has biased composition (basic and acidic residues). Residues Ala122 to Ala144 show a composition bias toward low complexity. Residues Ala145–Gly171 show a composition bias toward pro residues. Residues Ala331–Ala352 are compositionally biased toward low complexity.

Belongs to the cyclin-dependent kinase 5 activator family. Heterodimer of a catalytic subunit and a regulatory subunit. Post-translationally, myristoylated. The Gly-2-Ala mutant is absent of the cell periphery, suggesting that a proper myristoylation signal is essential for the proper distribution of CDK5R2 (p39).

The protein localises to the cell membrane. In terms of biological role, activator of CDK5/TPKII. The protein is Cyclin-dependent kinase 5 activator 2 (Cdk5r2) of Mus musculus (Mouse).